We begin with the raw amino-acid sequence, 364 residues long: GTPase Obg (364 aa).

Residues 1–159 (MKFLDEAKVY…KTIWLHLKLI (159 aa)) form the Obg domain. The 168-residue stretch at 160–327 (ADAGLVGLPN…VLRALRDIIV (168 aa)) folds into the OBG-type G domain. GTP contacts are provided by residues 166-173 (GLPNAGKS), 191-195 (FTTLH), 212-215 (DIPG), 279-282 (SQID), and 308-310 (SAV). Ser173 and Thr193 together coordinate Mg(2+). The segment at 333–364 (EKPAKVPKLRHRDMVVTDEGEDKGGDEGDDQP) is disordered.

This sequence belongs to the TRAFAC class OBG-HflX-like GTPase superfamily. OBG GTPase family. Monomer. Requires Mg(2+) as cofactor.

Its subcellular location is the cytoplasm. An essential GTPase which binds GTP, GDP and possibly (p)ppGpp with moderate affinity, with high nucleotide exchange rates and a fairly low GTP hydrolysis rate. Plays a role in control of the cell cycle, stress response, ribosome biogenesis and in those bacteria that undergo differentiation, in morphogenesis control. This Rhizobium johnstonii (strain DSM 114642 / LMG 32736 / 3841) (Rhizobium leguminosarum bv. viciae) protein is GTPase Obg.